Consider the following 273-residue polypeptide: Progestin and adipoQ receptor family member 4 (273 aa).

The next 6 membrane-spanning stretches (helical) occupy residues 52–72 (IYTHGLALLGFLVLVPMTMPW), 79–99 (GWLGGTHCVACLAPPAGSVLY), 115–135 (LLALDMCGVCLVNTLGALPII), 147–167 (PAALVGYTVLSGVAGWRALTA), 185–205 (LLVFGARGVGLGSGAPGSLPC), and 245–265 (LLSVGSILQLHAGVVPDLLWA).

It belongs to the ADIPOR family. As to quaternary structure, interacts with CERS2 and CERS5; the interaction regulates CERS2 and CERS5 stabilities and activities and is inhibited in presence of ceramides. As to expression, relatively widely expressed in a range of tissues. Expressed in subcutaneous white adipose tissue.

The protein localises to the golgi apparatus membrane. Functionally, plays a role in maintaining adipose tissue function through the regulation of ceramide levels. Mediates the stability of ceramide synthetases, CERS2 and CERS5, and their activities. The sequence is that of Progestin and adipoQ receptor family member 4 from Homo sapiens (Human).